The sequence spans 459 residues: Zinc finger transcription factor lin-29 (459 aa).

A compositionally biased stretch (polar residues) spans 1–14; the sequence is MDQTVLDSAFNSPV. Residues 1 to 73 are disordered; that stretch reads MDQTVLDSAF…GSTGSTPAHH (73 aa). The segment covering 16–56 has biased composition (low complexity); the sequence is SGIAGTTTGSGSTTHFGVGTNFKVSVRSSSRSTDGTDSTDG. A compositionally biased stretch (polar residues) spans 57-73; the sequence is ANSDNVTGSTGSTPAHH. 5 consecutive C2H2-type zinc fingers follow at residues 151–173, 180–202, 208–232, 238–260, and 269–291; these read YKCT…MRIH, GPCN…IRTH, YKCK…SRCH, FKCN…IPKH, and HICP…MTKH. The tract at residues 390 to 406 is interacts with mab-10; the sequence is PGFNMITPLENIQRYNG. A compositionally biased stretch (low complexity) spans 423 to 444; the sequence is VSSTPSSTSSSSAGSSSSQGGV. The disordered stretch occupies residues 423 to 459; the sequence is VSSTPSSTSSSSAGSSSSQGGVFNPQSLINNMKNHSY. Polar residues predominate over residues 446–459; that stretch reads NPQSLINNMKNHSY.

Interacts (via C-terminus) with transcription cofactor mab-10. Expressed in lateral hypodermal seam cells (at protein level).

It is found in the nucleus. Its function is as follows. Transcription factor which regulates the expression of various genes, including those involved in cuticle synthesis and maintenance, such as collagens, and in lipid metabolism. Binds to promoter regions of genes, at 5'-[(T/G)TTTTTT(A/T/C/G)]-3' consensus sequences. Heterochronic protein which controls the choice of stage specific cell fates, including at the juvenile to adult transition. Promotes differentiation, together with transcriptional cofactor mab-10, perhaps as part of a transcriptional complex. Required for vulval morphogenesis and egg laying; perhaps by acting in a subset of the lateral seam cells. Involved in the exit of seam cells from the cell cycle. Required for specification of uterine pi-cell fate, acting upstream of lin-12 Notch signaling, perhaps via maintenance of lag-2 expression in the anchor cell (AC). Involved in morphogenesis of the specialized male tail used in mating. Acts cell non-autonomously from the hypodermis to regulate expression of genes in the intestine, including genes involved in lipid metabolism. May regulate vitellogenesis via the mTORC2 signaling mediated pathway, independently of daf-16. May promote nuclear accumulation of mab-10 in seam cells post-transcriptionally. Dispensable for seam cell fusion. In terms of biological role, required for seam cell fusion. This is Zinc finger transcription factor lin-29 from Caenorhabditis elegans.